Here is a 212-residue protein sequence, read N- to C-terminus: Thymidylate kinase (212 aa).

Residue 11 to 18 coordinates ATP; sequence GMEGAGKS.

This sequence belongs to the thymidylate kinase family.

It carries out the reaction dTMP + ATP = dTDP + ADP. Its function is as follows. Phosphorylation of dTMP to form dTDP in both de novo and salvage pathways of dTTP synthesis. The protein is Thymidylate kinase of Colwellia psychrerythraea (strain 34H / ATCC BAA-681) (Vibrio psychroerythus).